We begin with the raw amino-acid sequence, 331 residues long: HTH-type transcriptional regulator RipA (331 aa).

One can recognise an HTH araC/xylS-type domain in the interval Arg112–Gly209. DNA-binding regions (H-T-H motif) lie at residues Glu129–Thr150 and Ile176–Thr199.

Its function is as follows. Under iron limitation, RipA negatively controls the expression of the acn (aconitase), catA (catechol 1,2 dioxygenase), leuCD (isopropylmalate dehydratase), narKGHJI (nitrite/nitrate transporter and nitrate reductase), sdhCAB (succinate dehydrogenase), pta (phosphotransacetylase) and katA (catalase) genes. Binds to the consensus sequence in the promoter region. The chain is HTH-type transcriptional regulator RipA from Corynebacterium glutamicum (strain ATCC 13032 / DSM 20300 / JCM 1318 / BCRC 11384 / CCUG 27702 / LMG 3730 / NBRC 12168 / NCIMB 10025 / NRRL B-2784 / 534).